Reading from the N-terminus, the 781-residue chain is Homeobox protein SIX4 (781 aa).

Positions 1-10 (MSSSSPTGQI) are enriched in polar residues. Disordered regions lie at residues 1–55 (MSSS…PLEP) and 270–321 (WFKN…GITN). The residue at position 2 (serine 2) is an N-acetylserine. A DNA-binding region (homeobox) is located at residues 223–282 (GEETVYCFKEKSRNALKELYKQNRYPSPAEKRHLAKITGLSLTQVSNWFKNRRQRDRNPS). Composition is skewed to basic and acidic residues over residues 278-290 (DRNP…KSES) and 299-308 (ESSKGHEDLS). The residue at position 640 (serine 640) is a Phosphoserine.

The protein belongs to the SIX/Sine oculis homeobox family. In terms of assembly, interacts with EYA3; acts cooperatively with EYA3 to transactivate target genes through interaction and nuclear translocation of EYA3 protein.

The protein resides in the nucleus. The protein localises to the cytoplasm. Its function is as follows. Transcriptional regulator which can act as both a transcriptional repressor and activator by binding a DNA sequence on these target genes and is involved in processes like cell differentiation, cell migration and cell survival. Transactivates gene expression by binding a 5'-[CAT]A[CT][CT][CTG]GA[GAT]-3' motif present in the Trex site and a 5'-TCA[AG][AG]TTNC-3' motif present in the MEF3 site of the muscle-specific genes enhancer. Acts cooperatively with EYA proteins to transactivate their target genes through interaction and nuclear translocation of EYA protein. Acts synergistically with SIX1 to regulate target genes involved in formation of various organs, including muscle, kidney, gonad, ganglia, olfactory epithelium and cranial skeleton. Plays a role in several important steps of muscle development. Controls the genesis of hypaxial myogenic progenitors in the dermomyotome by transactivating PAX3 and the delamination and migration of the hypaxial precursors from the ventral lip to the limb buds through the transactivation of PAX3, MET and LBX1. Controls myoblast determination by transactivating MYF5, MYOD1 and MYF6. Controls somitic differentiation in myocyte through MYOG transactivation. Plays a role in synaptogenesis and sarcomere organization by participating in myofiber specialization during embryogenesis by activating fast muscle program in the primary myotome resulting in an up-regulation of fast muscle genes, including ATP2A1, MYL1 and TNNT3. Simultaneously, is also able to activate inhibitors of slow muscle genes, such as SOX6, HRASLS, and HDAC4, thereby restricting the activation of the slow muscle genes. During muscle regeneration, negatively regulates differentiation of muscle satellite cells through down-regulation of MYOG expression. During kidney development regulates the early stages of metanephros development and ureteric bud formation through regulation of GDNF, SALL1, PAX8 and PAX2 expression. Plays a role in gonad development by regulating both testis determination and size determination. In gonadal sex determination, transactivates ZFPM2 by binding a MEF3 consensus sequence, resulting in SRY up-regulation. In gonadal size determination, transactivates NR5A1 by binding a MEF3 consensus sequence resulting in gonadal precursor cell formation regulation. During olfactory development mediates the specification and patterning of olfactory placode through fibroblast growth factor and BMP4 signaling pathways and also regulates epithelial cell proliferation during placode formation. Promotes survival of sensory neurons during early trigeminal gangliogenesis. In the developing dorsal root ganglia, up-regulates SLC12A2 transcription. Regulates early thymus/parathyroid organogenesis through regulation of GCM2 and FOXN1 expression. Forms gustatory papillae during development of the tongue. Also plays a role during embryonic cranial skeleton morphogenesis. The polypeptide is Homeobox protein SIX4 (SIX4) (Homo sapiens (Human)).